A 450-amino-acid polypeptide reads, in one-letter code: Divalent metal cation transporter MntH (450 aa).

The next 11 membrane-spanning stretches (helical) occupy residues 44 to 64, 77 to 97, 121 to 141, 152 to 172, 181 to 201, 218 to 238, 273 to 293, 310 to 330, 366 to 386, 387 to 407, and 419 to 439; these read LLAFVGPGYLVSVGYMDPGNW, TLLSVILLSNLMAILLQSLAA, FLLWLACEAAIIACDLAEVIG, IPLIGGALIAALDAFLLLLLM, AFVIALLAVIAVCFAVQIVAA, IFTNPEMLYIAIGIIGATVMP, IALMLALFINAAILVVAAATF, LLSPLLGLGIASTLFAIALLA, GIAIIPVIIVTAIYGERGTAD, LLVFSQVVLSMQLPFAVIPLV, and FAISPYVAAIAWIVAGVIVVL.

It belongs to the NRAMP family.

The protein localises to the cell inner membrane. Its function is as follows. H(+)-stimulated, divalent metal cation uptake system. The chain is Divalent metal cation transporter MntH from Bradyrhizobium diazoefficiens (strain JCM 10833 / BCRC 13528 / IAM 13628 / NBRC 14792 / USDA 110).